A 359-amino-acid chain; its full sequence is Histidinol-phosphate aminotransferase (359 aa).

K217 is subject to N6-(pyridoxal phosphate)lysine.

Belongs to the class-II pyridoxal-phosphate-dependent aminotransferase family. Histidinol-phosphate aminotransferase subfamily. As to quaternary structure, homodimer. It depends on pyridoxal 5'-phosphate as a cofactor.

It catalyses the reaction L-histidinol phosphate + 2-oxoglutarate = 3-(imidazol-4-yl)-2-oxopropyl phosphate + L-glutamate. The protein operates within amino-acid biosynthesis; L-histidine biosynthesis; L-histidine from 5-phospho-alpha-D-ribose 1-diphosphate: step 7/9. This is Histidinol-phosphate aminotransferase from Salmonella paratyphi A (strain ATCC 9150 / SARB42).